The sequence spans 1248 residues: MGKDQELLEAARTGNVALVEKLLSGRKGGILGGGSGPLPLSNLLSIWRGPNVNCTDSSGYTALHHAALNGHKDIVLKLLQYEASTNVADNKGYFPIHLAAWKGDVEIVKILIHHGPSHSRVNEQNNENETALHCAAQYGHSEVVAVLLEELTDPTIRNSKLETPLDLAALYGRLRVVKMIISAHPNLMSCNTRKHTPLHLAARNGHKAVVQVLLEAGMDVSCQTEKGSALHEAALFGKVDVVRVLLETGIDANIKDSLGRTVLDILKEHPSQKSLQIATLLQEYLEGVGRSTVLEEPVQEDATQETHISSPVESPSQKTKSETVTGELSKLLDEIKLCQEKDYSFEDLCHTISDHYLDNLSKISEEELGKNGSQSVRTSSTINLSPGEVEEEDDDENTCGPSGLWEALTPCNGCRNLGFPMLAQESYPKKRNYTMEIVPSASLDTFPSENENFLCDLMDTAVTKKPCSLEIARAPSPRTDNASEVAVTTPGTSNHRNSSTGPTPDCSPPSPDTALKNIVKVIRPQPKQRTSIVSSLDFHRMNHNQEYFEINTSTGCTSFTASPPASPPTSSVGTTEVKNEGTNHTDDLSRQDDNDPPKEYDPGQFAGLLHGSSPACESPENPFHLYGKREQCEKGQDEVSLANSPLPFKQSPIENNSEPLVKKIKPKVVSRTIFHKKSNQLENHTIVGTRSTRSGSRNGDQWVMNAGGFVERACTLGRIRSLPKALIDMHLSKSVSKSDSDLIAYPSNEKTSRVNWSESSTAEHSSKGNSERTPSFTSEWEEIDKIMSSIDVGINNELKEMNGETTRPRCPVQTVGQWLESIGLPQYENHLMANGFDNVQFMGSNVMEDQDLLEIGILNSGHRQRILQAIQLLPKMRPIGHDGYHPTSVAEWLDSIELGDYTKAFLINGYTSMDLLKKIWEVELINVLKINLIGHRKRILASLGDRLHDDPPQKPPRSITLREPSGNHTPPQLSPSLSQSTYTTGGSLDVPHIIMQGDARRRRNENYFDDIPRSKLERQMAQTGDWGEPSITLRPPNEATASTPVQYWQHHPEKLIFQSCDYKAFYLGSMLIKELRGTESTQDACAKMRANCQKSTEQMKKVPTIILSVSYKGVKFIDATNKNIIAEHEIRNISCAAQDPEDLSTFAYITKDLKSNHHYCHVFTAFDVNLAYEIILTLGQAFEVAYQLALQARKGGHSSTLPESFENKPSKPIPKPRVSIRKSVDLLHASHTGQEPSERHTEEALRKF.

ANK repeat units lie at residues 2-31 (GKDQ…GGIL), 58-87 (SGYT…STNV), 91-120 (KGYF…SHSR), 127-156 (ENET…DPTI), 160-189 (KLET…NLMS), 193-222 (RKHT…DVSC), and 225-254 (EKGS…DANI). The disordered stretch occupies residues 296–322 (EPVQEDATQETHISSPVESPSQKTKSE). A compositionally biased stretch (polar residues) spans 305–322 (ETHISSPVESPSQKTKSE). S309, S310, S314, S353, and S364 each carry phosphoserine. Disordered stretches follow at residues 367-400 (ELGK…NTCG), 474-514 (APSP…PDTA), and 558-623 (SFTA…ENPF). The segment covering 371–384 (NGSQSVRTSSTINL) has biased composition (polar residues). Residues 388 to 397 (EVEEEDDDEN) show a composition bias toward acidic residues. T503 is subject to Phosphothreonine. A phosphoserine mark is found at S507 and S510. The segment covering 558 to 575 (SFTASPPASPPTSSVGTT) has biased composition (low complexity). Residues 577 to 601 (VKNEGTNHTDDLSRQDDNDPPKEYD) show a composition bias toward basic and acidic residues. Phosphoserine is present on S738. The interval 749–777 (EKTSRVNWSESSTAEHSSKGNSERTPSFT) is disordered. The span at 753 to 763 (RVNWSESSTAE) shows a compositional bias: polar residues. T773 bears the Phosphothreonine mark. At S775 the chain carries Phosphoserine. 2 consecutive SAM domains span residues 810–876 (CPVQ…LPKM) and 884–949 (YHPT…RLHD). Y901 bears the Phosphotyrosine mark. The Nuclear localization signal signature appears at 935-938 (HRKR). Residues 944–989 (GDRLHDDPPQKPPRSITLREPSGNHTPPQLSPSLSQSTYTTGGSLD) are disordered. Residues 969–984 (TPPQLSPSLSQSTYTT) show a composition bias toward low complexity. The residue at position 974 (S974) is a Phosphoserine. Y1007 is modified (phosphotyrosine). Residues 1056 to 1213 (IFQSCDYKAF…SFENKPSKPI (158 aa)) enclose the PID domain. The disordered stretch occupies residues 1197-1248 (HSSTLPESFENKPSKPIPKPRVSIRKSVDLLHASHTGQEPSERHTEEALRKF). Residues 1236–1248 (PSERHTEEALRKF) are compositionally biased toward basic and acidic residues.

Isoform 3 interacts with DLG4. Interacts with EPHA8. Isoform 2 interacts with COIL. Isoform 4 interacts with APP and EPHA8. Isoform 6 interacts with EPHA8. Post-translationally, isoform 3 nuclear translocation requires an NMDAR-dependent proteolytic cleavage. As to expression, highly expressed in marrow from patients with pre-B ALL associated with the t(1;19) translocation. Strongly expressed in brain and testis. Expressed in fetal brain. Isoform 4 is highly expressed in brain (at protein level). Isoform 6 is expressed in brain and several cancer cell lines.

The protein localises to the cytoplasm. It localises to the nucleus. Its subcellular location is the postsynaptic density. It is found in the cell projection. The protein resides in the dendritic spine. The protein localises to the cajal body. In terms of biological role, isoform 2 may participate in the regulation of nucleoplasmic coilin protein interactions in neuronal and transformed cells. Functionally, isoform 3 can regulate global protein synthesis by altering nucleolar numbers. Isoform 4 may play a role as a modulator of APP processing. Overexpression can down-regulate APP processing. The sequence is that of Ankyrin repeat and sterile alpha motif domain-containing protein 1B (ANKS1B) from Homo sapiens (Human).